Here is a 504-residue protein sequence, read N- to C-terminus: Arabinose import ATP-binding protein AraG (504 aa).

ABC transporter domains lie at 8–243 (LSFR…MVGR) and 256–499 (YGEE…MPKV). Residue 40–47 (GENGAGKS) coordinates ATP.

This sequence belongs to the ABC transporter superfamily. Arabinose importer (TC 3.A.1.2.2) family. In terms of assembly, the complex is composed of two ATP-binding proteins (AraG), two transmembrane proteins (AraH) and a solute-binding protein (AraF).

The protein localises to the cell inner membrane. The enzyme catalyses L-arabinose(out) + ATP + H2O = L-arabinose(in) + ADP + phosphate + H(+). Part of the ABC transporter complex AraFGH involved in arabinose import. Responsible for energy coupling to the transport system. This is Arabinose import ATP-binding protein AraG from Shigella boydii serotype 4 (strain Sb227).